A 220-amino-acid chain; its full sequence is Iron-sulfur cluster repair protein YtfE (220 aa).

Belongs to the RIC family. YtfE subfamily. Homodimer.

It localises to the cytoplasm. Its function is as follows. Di-iron-containing protein involved in the repair of iron-sulfur clusters damaged by oxidative and nitrosative stress conditions. In Escherichia coli O8 (strain IAI1), this protein is Iron-sulfur cluster repair protein YtfE.